Reading from the N-terminus, the 1323-residue chain is Sister chromatid cohesion protein PDS5 homolog A-B (1323 aa).

An HEAT repeat occupies 385-421 (FLVNDQLLGFVRERTLDKRWRVRKEAMMGLAQLYKKY). The disordered stretch occupies residues 1138–1323 (PLNATGRRPY…TAQRQIDLHR (186 aa)). A compositionally biased stretch (low complexity) spans 1153-1165 (SEISNNVSINSES). 2 stretches are compositionally biased toward polar residues: residues 1166 to 1176 (DASVANRQSSE) and 1210 to 1220 (LDQTAPSNTGT). Basic and acidic residues predominate over residues 1235–1246 (NIRKESEEKKVD).

As to quaternary structure, interacts with the cohesin complex. Binds chromatin in a cohesin-dependent manner.

Its subcellular location is the nucleus. In terms of biological role, may regulate sister chromatid cohesion during mitosis and couple it to DNA replication. This Xenopus laevis (African clawed frog) protein is Sister chromatid cohesion protein PDS5 homolog A-B (pds5a-b).